A 2527-amino-acid polypeptide reads, in one-letter code: Highly reducing polyketide synthase poxF (2527 aa).

The Ketosynthase family 3 (KS3) domain maps to 20–445; sequence VMPIAIIGMA…GANAHVIVES (426 aa). Catalysis depends on for beta-ketoacyl synthase activity residues Cys-193, His-328, and His-368. A malonyl-CoA:ACP transacylase (MAT) domain region spans residues 560 to 882; that stretch reads VFTGQGAQWF…TYASCLSRGQ (323 aa). An N-terminal hotdog fold region spans residues 951–1086; it reads HDLLGVPAAG…GLCCTPSPAQ (136 aa). The segment at 951-1243 is dehydratase (DH) domain; that stretch reads HDLLGVPAAG…SVRVINNAGT (293 aa). The region spanning 951 to 1270 is the PKS/mFAS DH domain; the sequence is HDLLGVPAAG…CQSLGSSAVV (320 aa). His-983 (proton acceptor; for dehydratase activity) is an active-site residue. Residues 1108–1270 are C-terminal hotdog fold; sequence AWRILNPADT…CQSLGSSAVV (163 aa). Asp-1174 (proton donor; for dehydratase activity) is an active-site residue. Positions 1406-1587 are methyltransferase (CMet) domain; it reads EDQAEWSSVS…RLLAKAGFEP (182 aa). The interval 1823–2137 is enoyl reductase (ER) (ER) domain; the sequence is GLLNSLVFTE…TGKHMGKIVL (315 aa). The ketoreductase (KR) domain stretch occupies residues 2162–2339; sequence TYLLVGGVGG…AVSIDLGMVS (178 aa). A Carrier domain is found at 2445–2522; it reads EVTTLIQSAL…GLAGQMAKKS (78 aa). At Ser-2482 the chain carries O-(pantetheine 4'-phosphoryl)serine.

It functions in the pathway secondary metabolite biosynthesis. Highly reducing polyketide synthase; part of the gene cluster that mediates the biosynthesis of oxaleimides, cytotoxic compounds containing an unusual disubstituted succinimide moiety. The first step of the pathway is provided by the HR-PKS poxF that serves in a new mode of collaborative biosynthesis with the PKS-NRPS poxE, by providing the olefin containing amino acid substrate via the synthesis of an ACP-bound dec-4-enoate. The cytochrome P450 monooxygenase poxM-catalyzed oxidation at the alpha-position creates the enzyme-bound 2-hydroxydec-4-enoyl-ACP thioester, which may be prone to spontaneous hydrolysis to yield 2-hydroxydec-4-enoic acid due to increased electrophilicity of the carbonyl. 2-hydroxydec-4-enoic acid can then be further oxidized by poxM to yield the alpha-ketoacid 2-oxodec-4-enoicacid, which is reductively aminated by the aminotransferase poxL to yield (S,E)-2-aminodec-4-enoic acid. The Hybrid PKS-NRPS synthetase poxE then performs condensation between the octaketide product of its PKS modules and the amino group of (S,E)-2-aminodec-4-enoic acid which is activated and incorporated by the adenylation domain. The resulting aminoacyl product can be cyclized by the Diels-Alderase PoxQ and reductively released by the reductive (R) domain of poxE to yield an aldehyde intermediate. The released aldehyde is then substrate for a Knoevenagel condensation by the hydrolyase poxO followed by an oxidation at the 5-position of the pyrrolidone ring. The presence of the olefin from the amino acid building block allows for migration of the substituted allyl group to occur. This allylic transposition reaction takes place in a conjugate addition, semipinacol-like fashion to yield a succinimide intermediate. Iterative two-electron oxidations of the C7 methyl of the succinimide intermediate to the carboxylic acid can be catalyzed by one of two remaining cytochrome P450 monooxygenasess poxC or poxD to yield oxaleimide A. Subsequent oxidation yields the maleimide scaffold oxaleimide I. Both oxaleimide A and oxaleimide I can undergo oxidative modifications in the decalin ring to yield the series of products oxaleimides B to H. The chain is Highly reducing polyketide synthase poxF from Penicillium oxalicum.